The sequence spans 691 residues: Elongation factor G (691 aa).

The region spanning 12–286 is the tr-type G domain; sequence NKLRNIGIMA…GIVRYLPSPL (275 aa). GTP is bound by residues 21–28, 85–89, and 139–142; these read AHIDAGKT, DTPGH, and NKMD.

This sequence belongs to the TRAFAC class translation factor GTPase superfamily. Classic translation factor GTPase family. EF-G/EF-2 subfamily.

It is found in the cytoplasm. Functionally, catalyzes the GTP-dependent ribosomal translocation step during translation elongation. During this step, the ribosome changes from the pre-translocational (PRE) to the post-translocational (POST) state as the newly formed A-site-bound peptidyl-tRNA and P-site-bound deacylated tRNA move to the P and E sites, respectively. Catalyzes the coordinated movement of the two tRNA molecules, the mRNA and conformational changes in the ribosome. The chain is Elongation factor G from Fervidobacterium nodosum (strain ATCC 35602 / DSM 5306 / Rt17-B1).